The primary structure comprises 118 residues: Ribonuclease P protein component (118 aa).

Belongs to the RnpA family. Consists of a catalytic RNA component (M1 or rnpB) and a protein subunit.

It carries out the reaction Endonucleolytic cleavage of RNA, removing 5'-extranucleotides from tRNA precursor.. RNaseP catalyzes the removal of the 5'-leader sequence from pre-tRNA to produce the mature 5'-terminus. It can also cleave other RNA substrates such as 4.5S RNA. The protein component plays an auxiliary but essential role in vivo by binding to the 5'-leader sequence and broadening the substrate specificity of the ribozyme. This chain is Ribonuclease P protein component, found in Desulfatibacillum aliphaticivorans.